The primary structure comprises 396 residues: Elongation factor Tu 1 (396 aa).

The 197-residue stretch at 10 to 206 (KPHVNVGTIG…ALDTYIPTPE (197 aa)) folds into the tr-type G domain. Residues 19-26 (GHVDHGKT) are G1. A GTP-binding site is contributed by 19–26 (GHVDHGKT). Thr26 lines the Mg(2+) pocket. Residues 60-64 (GITIN) form a G2 region. Residues 81-84 (DCPG) form a G3 region. Residues 81-85 (DCPGH) and 136-139 (NKCD) contribute to the GTP site. The segment at 136 to 139 (NKCD) is G4. The G5 stretch occupies residues 174–176 (SAK).

It belongs to the TRAFAC class translation factor GTPase superfamily. Classic translation factor GTPase family. EF-Tu/EF-1A subfamily. As to quaternary structure, monomer.

The protein localises to the cytoplasm. It carries out the reaction GTP + H2O = GDP + phosphate + H(+). GTP hydrolase that promotes the GTP-dependent binding of aminoacyl-tRNA to the A-site of ribosomes during protein biosynthesis. This Acidovorax sp. (strain JS42) protein is Elongation factor Tu 1.